Here is a 455-residue protein sequence, read N- to C-terminus: tRNA-2-methylthio-N(6)-dimethylallyladenosine synthase (455 aa).

The 119-residue stretch at 18-136 (KLFFIQTYGC…FPEYLNRVKT (119 aa)) folds into the MTTase N-terminal domain. [4Fe-4S] cluster-binding residues include cysteine 27, cysteine 63, cysteine 97, cysteine 173, cysteine 177, and cysteine 180. Positions 159–389 (RKSDIKGFVT…VEIVNTGIAK (231 aa)) constitute a Radical SAM core domain. Residues 392–455 (KDAEGKIYEV…SFSLIGEVEK (64 aa)) enclose the TRAM domain.

It belongs to the methylthiotransferase family. MiaB subfamily. As to quaternary structure, monomer. [4Fe-4S] cluster is required as a cofactor.

The protein localises to the cytoplasm. It catalyses the reaction N(6)-dimethylallyladenosine(37) in tRNA + (sulfur carrier)-SH + AH2 + 2 S-adenosyl-L-methionine = 2-methylsulfanyl-N(6)-dimethylallyladenosine(37) in tRNA + (sulfur carrier)-H + 5'-deoxyadenosine + L-methionine + A + S-adenosyl-L-homocysteine + 2 H(+). Catalyzes the methylthiolation of N6-(dimethylallyl)adenosine (i(6)A), leading to the formation of 2-methylthio-N6-(dimethylallyl)adenosine (ms(2)i(6)A) at position 37 in tRNAs that read codons beginning with uridine. This chain is tRNA-2-methylthio-N(6)-dimethylallyladenosine synthase, found in Clostridium beijerinckii (strain ATCC 51743 / NCIMB 8052) (Clostridium acetobutylicum).